We begin with the raw amino-acid sequence, 690 residues long: MAPPRHARLVAATIAVLLCHLPRSAASPSWSDAAVSPPSPSPQLCPMMQQRSVLPPRVSELPASPFTAKAAFVRYWNRKVHSNRPHPAFFFAKLSPLSAPDAAAFSTLAAAGQLGSRIRAFCAAASLLCPTTPGSSWSKSSSDGDGAAAAAAPAGGGGGGGGGGDGGAAPFKNYENGNFSSYGNSGGGGADQFAVYSSGQSNGGGGGGGGVDSFRRYGKGSQGRNDSFTSYEAGGNVGTSSFTSYNGDATGGAGGFSSYAGDANTVAVSFGNYDHTGNGRSREFSEYTQDANTGEESFAAYGKTANGAAESFRTYGNHSNSIATGFDNYGDRANGAADAFSSYGASGNTPENTFKSYASGSNAGVDDFKGYRDDANVGNDSFTSYASNANGAAAGFESYGKSVNPGSVTFKGYGLGSNPNHRIGFARYSGDNTTFKAYSNDGVEFKEYQNMSKMEVSKIEAAARRPPLRWSPEPGKFFRERDLVAGNRMPMPDIADRTPPRAFLPRDIAAKIPFDAAAVSALFGAAPGTAMRQVVSSTVAECARPPSRGETKRCATSAEDVVDFAVEMLGDNVVARATESTAGGGGDVRLGRVAGVPAGGNVTRSVSCHQSLFPYLVYYCHSVPTVRVYEADILAVDSNQKINHGVAICHLDTSDWSPNHGAFIALGGKPGEMEVCHWIFQGDMTWTVAN.

The N-terminal stretch at 1-26 is a signal peptide; it reads MAPPRHARLVAATIAVLLCHLPRSAA. The interval 134-163 is disordered; sequence GSSWSKSSSDGDGAAAAAAPAGGGGGGGGG. The span at 135–153 shows a compositional bias: low complexity; the sequence is SSWSKSSSDGDGAAAAAAP. Residues 154–163 are compositionally biased toward gly residues; the sequence is AGGGGGGGGG. A glycan (N-linked (GlcNAc...) asparagine) is linked at N178. Residues 201 to 211 are compositionally biased toward gly residues; the sequence is SNGGGGGGGGV. The segment at 201–232 is disordered; that stretch reads SNGGGGGGGGVDSFRRYGKGSQGRNDSFTSYE. 6 N-linked (GlcNAc...) asparagine glycosylation sites follow: N225, N317, N379, N432, N450, and N601. The 213-residue stretch at 477-689 folds into the BURP domain; that stretch reads FFRERDLVAG…FQGDMTWTVA (213 aa).

As to expression, expressed in panicles.

The chain is BURP domain-containing protein 14 (BURP14) from Oryza sativa subsp. japonica (Rice).